The primary structure comprises 708 residues: Leucine-rich repeat neuronal protein 3 (708 aa).

The N-terminal stretch at 1–22 is a signal peptide; it reads MKDMPLRIHVLLGLAITTLVQA. The 47-residue stretch at 23 to 69 folds into the LRRNT domain; the sequence is VDKKVDCPRLCTCEIRPWFTPRSIYMEASTVDCNDLGLLTFPARLPA. The Extracellular segment spans residues 23–628; that stretch reads VDKKVDCPRL…KEYEKNNTTT (606 aa). LRR repeat units lie at residues 70–91, 93–114, 117–138, 141–162, 165–186, 189–210, 213–234, 237–258, 261–282, 285–304, 310–332, and 335–358; these read NTQILLLQTNNIAKIEYSTDFP, NLTGLDLSQNNLSSVTNINVKK, QLLSVYLEENKLTELPEKCLSE, NLQELYINHNLLSTISPGAFIG, NLLRLHLNSNRLQMINSKWFDA, NLEILMIGENPIIRIKDMNFKP, NLRSLVIAGINLTEIPDNALVG, NLESISFYDNRLIKVPHVALQK, NLKFLDLNKNPINRIRRGDFSN, HLKELGINNMPELISIDSLA, DLRKIEATNNPRLSYIHPNAFFR, and KLESLMLNSNALSALYHGTIESLP. N-linked (GlcNAc...) asparagine glycosylation is found at Asn-93 and Asn-103. Residue Asn-223 is glycosylated (N-linked (GlcNAc...) asparagine). The region spanning 368 to 421 is the LRRCT domain; that stretch reads NPIRCDCVIRWMNMNKTNIRFMEPDSLFCVDPPEFQGQNVRQVHFRDMMEICLP. Residue Asn-382 is glycosylated (N-linked (GlcNAc...) asparagine). The Ig-like C2-type domain maps to 421 to 514; it reads PLIAPESFPS…DLKSVMIKVD (94 aa). The cysteines at positions 444 and 496 are disulfide-linked. Residues Asn-522, Asn-579, Asn-608, Asn-624, and Asn-625 are each glycosylated (N-linked (GlcNAc...) asparagine). One can recognise a Fibronectin type-III domain in the interval 523–617; the sequence is GSLNIKIRDI…NVTTKGLHPD (95 aa). A helical transmembrane segment spans residues 629–649; that stretch reads LMACLGGLLGIIGVICLISCL. Over 650-708 the chain is Cytoplasmic; that stretch reads SPEMNCDGGHSYVRNYLQKPTFALGELYPPLINLWEAGKEKSTSLKVKATVIGLPTNMS.

It is found in the membrane. The protein is Leucine-rich repeat neuronal protein 3 (LRRN3) of Homo sapiens (Human).